A 427-amino-acid polypeptide reads, in one-letter code: N-myc proto-oncogene protein (427 aa).

Disordered stretches follow at residues 45-79 (FELL…SVGL), 144-173 (EKLQ…SGRA), 195-255 (AAEG…STNK), and 297-349 (APSP…RNHN). Composition is skewed to pro residues over residues 49-61 (PTPP…PAPG) and 152-167 (AAPP…PPVP). Residues 210 to 221 (RASSSSSSSGDD) show a composition bias toward low complexity. Positions 222-242 (TLSDSEDDEDEEEEDEEEEID) are enriched in acidic residues. 2 positions are modified to phosphoserine; by CK2: serine 224 and serine 226. The bHLH domain occupies 343–396 (ERRRNHNILERQRANDLRSSFLTLRDHVLSELVQNEKAAKVVILKKATEYVHSL). Residues 396–417 (LQAEEQKLLLEKEKLQARQEQL) form a leucine-zipper region.

In terms of assembly, efficient DNA binding requires dimerization with another bHLH protein. Binds DNA as a heterodimer with MAX.

It is found in the nucleus. The protein is N-myc proto-oncogene protein (MYCN) of Serinus canaria (Island canary).